The chain runs to 500 residues: Glycerol kinase (500 aa).

Residue T16 participates in ADP binding. ATP is bound by residues T16 and T17. T16 serves as a coordination point for sn-glycerol 3-phosphate. R20 provides a ligand contact to ADP. Sn-glycerol 3-phosphate is bound by residues R86, E87, Y138, and D247. Residues R86, E87, Y138, D247, and Q248 each contribute to the glycerol site. The ADP site is built by T269 and G312. ATP is bound by residues T269, G312, Q316, and G413. ADP is bound by residues G413 and N417.

This sequence belongs to the FGGY kinase family.

It carries out the reaction glycerol + ATP = sn-glycerol 3-phosphate + ADP + H(+). It functions in the pathway polyol metabolism; glycerol degradation via glycerol kinase pathway; sn-glycerol 3-phosphate from glycerol: step 1/1. With respect to regulation, inhibited by fructose 1,6-bisphosphate (FBP). In terms of biological role, key enzyme in the regulation of glycerol uptake and metabolism. Catalyzes the phosphorylation of glycerol to yield sn-glycerol 3-phosphate. In Rippkaea orientalis (strain PCC 8801 / RF-1) (Cyanothece sp. (strain PCC 8801)), this protein is Glycerol kinase.